The following is a 210-amino-acid chain: Na(+)-translocating NADH-quinone reductase subunit D (210 aa).

5 helical membrane passes run 42–62 (FVMTLAVTFVTALSNFSVSLI), 72–92 (IIVQMAIIASLVIVVDQVLKA), 103–123 (VFVGLIITNCIVMGRAEAFAM), 131–151 (LIDGIGNGLGYGFVLITVGFF), and 178–198 (NGLMLLAPSAFFLIGFLIWVI).

The protein belongs to the NqrDE/RnfAE family. In terms of assembly, composed of six subunits; NqrA, NqrB, NqrC, NqrD, NqrE and NqrF.

Its subcellular location is the cell inner membrane. It carries out the reaction a ubiquinone + n Na(+)(in) + NADH + H(+) = a ubiquinol + n Na(+)(out) + NAD(+). This reaction is tightly coupled to the Na(+) pumping activity and specifically requires Na(+) for activity. Inhibited by korormicin and 2-N-heptyl-4-hydroxyquinoline N-oxide (HQNO). In terms of biological role, NQR complex catalyzes the reduction of ubiquinone-1 to ubiquinol by two successive reactions, coupled with the transport of Na(+) ions from the cytoplasm to the periplasm. NqrA to NqrE are probably involved in the second step, the conversion of ubisemiquinone to ubiquinol. This is Na(+)-translocating NADH-quinone reductase subunit D from Vibrio alginolyticus.